A 561-amino-acid polypeptide reads, in one-letter code: Alpha-1D adrenergic receptor (561 aa).

The Extracellular portion of the chain corresponds to 1–90; the sequence is MTFRDILSVT…VGGLVVSAQG (90 aa). The interval 10–71 is disordered; the sequence is TFEGPRSSSS…SSTGEPGAAA (62 aa). Gly residues predominate over residues 21–56; that stretch reads GGSGAGGGAGTVGPEGGAVGGVPGATGGGAVVGTGS. 2 N-linked (GlcNAc...) asparagine glycosylation sites follow: asparagine 60 and asparagine 76. A helical membrane pass occupies residues 91–115; that stretch reads VGVGVFLAAFILTAVAGNLLVILSV. The Cytoplasmic portion of the chain corresponds to 116–127; that stretch reads ACNRHLQTVTNY. Residues 128–153 traverse the membrane as a helical segment; that stretch reads FIVNLAVADLLLSAAVLPFSATMEVL. Topologically, residues 154-163 are extracellular; sequence GFWAFGRTFC. Residues 164 to 186 traverse the membrane as a helical segment; it reads DVWAAVDVLCCTASILSLCTISV. Over 187–207 the chain is Cytoplasmic; it reads DRYVGVRHSLKYPAIMTERKA. Residues 208-232 form a helical membrane-spanning segment; the sequence is AAILALLWAVALVVSVGPLLGWKEP. Topologically, residues 233–245 are extracellular; the sequence is VPPDERFCGITEE. The helical transmembrane segment at 246–269 threads the bilayer; it reads VGYAIFSSVCSFYLPMAVIVVMYC. Topologically, residues 270–342 are cytoplasmic; that stretch reads RVYVVARSTT…KFSREKKAAK (73 aa). The chain crosses the membrane as a helical span at residues 343 to 367; that stretch reads TLAIVVGVFVLCWFPFFFVLPLGSL. Over 368–374 the chain is Extracellular; it reads FPQLKPS. A helical transmembrane segment spans residues 375–399; that stretch reads EGVFKVIFWLGYFNSCVNPLIYPCS. The Cytoplasmic portion of the chain corresponds to 400–561; the sequence is SREFKRAFLR…DYSNLRETDI (162 aa). Cysteine 413 carries S-palmitoyl cysteine lipidation. The tract at residues 452–481 is disordered; that stretch reads APLALTAHPGAGSADTPETQDSVSSSRKPA. The span at 467–479 shows a compositional bias: polar residues; sequence TPETQDSVSSSRK.

It belongs to the G-protein coupled receptor 1 family. Adrenergic receptor subfamily. ADRA1D sub-subfamily. Interacts with FLNA (via filamin repeat 21); increases PKA-mediated phosphorylation of FLNA. In terms of processing, palmitoylated. Palmitoylation by ZDHHC21 may increase the expression of the receptor and regulate downstream signaling. In terms of tissue distribution, vas deferens, hippocampus, cerebral cortex, aorta, brain stem, heart and spleen.

It localises to the cell membrane. This alpha-adrenergic receptor mediates its effect through the influx of extracellular calcium. The chain is Alpha-1D adrenergic receptor (Adra1d) from Rattus norvegicus (Rat).